Consider the following 340-residue polypeptide: Putative pyridoxal kinase C18.10 (340 aa).

Residues Ser-19 and Tyr-130 each contribute to the substrate site. ATP is bound by residues Thr-189–Ser-190 and Gln-218–Gly-230. A substrate-binding site is contributed by Asp-231.

The protein belongs to the pyridoxine kinase family. A divalent metal cation is required as a cofactor.

The protein localises to the cytoplasm. It localises to the nucleus. It carries out the reaction pyridoxal + ATP = pyridoxal 5'-phosphate + ADP + H(+). Functionally, required for synthesis of pyridoxal-5-phosphate from vitamin B6. This Schizosaccharomyces pombe (strain 972 / ATCC 24843) (Fission yeast) protein is Putative pyridoxal kinase C18.10.